The following is a 644-amino-acid chain: SURP and G-patch domain-containing protein 1 (644 aa).

Positions 44 to 54 are enriched in basic and acidic residues; it reads REIEARMEQKA. Disordered regions lie at residues 44 to 74 and 98 to 122; these read REIE…ADAQ and AQAS…KRPL. Phosphothreonine is present on Thr128. The stretch at 188–230 is one SURP motif 1 repeat; it reads VIEKLARFVAEGGPELEKVAMEDYKDNPAFTFLHDKNSREFLY. Ser253 carries the phosphoserine modification. The stretch at 263–306 is one SURP motif 2 repeat; that stretch reads LAEKLARFIADGGPEVETIALQNNRENQAFSFLYDPNSQGYRYY. Disordered stretches follow at residues 316 to 342 and 360 to 412; these read AKAG…PEAL and PAVN…PSPL. Ser323 carries the phosphoserine modification. A compositionally biased stretch (pro residues) spans 360–369; the sequence is PAVNPTPSIP. Positions 379-385 match the Nuclear localization signal motif; the sequence is KRKRKSR. A phosphoserine mark is found at Ser408, Ser410, Ser413, and Ser484. In terms of domain architecture, G-patch spans 561 to 608; the sequence is VENIGYQMLMKMGWKEGEGLGTEGQGIKNPVNKGATTIDGAGFGIDRP.

As to quaternary structure, component of the spliceosome.

The protein localises to the nucleus. In terms of biological role, plays a role in pre-mRNA splicing. The polypeptide is SURP and G-patch domain-containing protein 1 (Sugp1) (Rattus norvegicus (Rat)).